We begin with the raw amino-acid sequence, 326 residues long: Lipoyl synthase (326 aa).

The [4Fe-4S] cluster site is built by C56, C61, C67, C82, C86, C89, and S298. The 220-residue stretch at 68-287 (WEDREATFLI…KDEADAIGYS (220 aa)) folds into the Radical SAM core domain.

Belongs to the radical SAM superfamily. Lipoyl synthase family. The cofactor is [4Fe-4S] cluster.

The protein localises to the cytoplasm. It carries out the reaction [[Fe-S] cluster scaffold protein carrying a second [4Fe-4S](2+) cluster] + N(6)-octanoyl-L-lysyl-[protein] + 2 oxidized [2Fe-2S]-[ferredoxin] + 2 S-adenosyl-L-methionine + 4 H(+) = [[Fe-S] cluster scaffold protein] + N(6)-[(R)-dihydrolipoyl]-L-lysyl-[protein] + 4 Fe(3+) + 2 hydrogen sulfide + 2 5'-deoxyadenosine + 2 L-methionine + 2 reduced [2Fe-2S]-[ferredoxin]. It functions in the pathway protein modification; protein lipoylation via endogenous pathway; protein N(6)-(lipoyl)lysine from octanoyl-[acyl-carrier-protein]: step 2/2. Its function is as follows. Catalyzes the radical-mediated insertion of two sulfur atoms into the C-6 and C-8 positions of the octanoyl moiety bound to the lipoyl domains of lipoate-dependent enzymes, thereby converting the octanoylated domains into lipoylated derivatives. This Streptomyces griseus subsp. griseus (strain JCM 4626 / CBS 651.72 / NBRC 13350 / KCC S-0626 / ISP 5235) protein is Lipoyl synthase.